The following is a 303-amino-acid chain: ATP synthase gamma chain (303 aa).

The protein belongs to the ATPase gamma chain family. As to quaternary structure, F-type ATPases have 2 components, CF(1) - the catalytic core - and CF(0) - the membrane proton channel. CF(1) has five subunits: alpha(3), beta(3), gamma(1), delta(1), epsilon(1). CF(0) has three main subunits: a, b and c.

It localises to the cell membrane. In terms of biological role, produces ATP from ADP in the presence of a proton gradient across the membrane. The gamma chain is believed to be important in regulating ATPase activity and the flow of protons through the CF(0) complex. The sequence is that of ATP synthase gamma chain from Nocardioides sp. (strain ATCC BAA-499 / JS614).